Consider the following 390-residue polypeptide: Nucleotide-sugar uncharacterized transporter 1 (390 aa).

10 helical membrane passes run 61–81, 89–109, 128–148, 155–175, 182–201, 206–228, 249–269, 278–298, 306–326, and 329–349; these read ICGPTVALTFNFVVAISIIFM, IGFEFPVFLTFIHYIVAYLLM, SLLPLYTLGIVMSLSTGLANV, VGFYQMAKIAVTPSIVFAEFL, SFMKVVSLTVVSVGVAVATV, FSLFGACVAFAWIIPSATNKILW, ITLLFLVSMIPFLDPPGALSF, AILVSALLGFFLQWSGALALG, VVLGQFKTCVLLLGNYYIFGS, and GFISVGGAFVAIMGTSLYTYL. Residues 356-365 are compositionally biased toward low complexity; the sequence is LKTSSSSSAL. Residues 356–390 are disordered; sequence LKTSSSSSALSEKKSRFSDLKDDDKNLEPYGSEAV. The segment covering 366-382 has biased composition (basic and acidic residues); the sequence is SEKKSRFSDLKDDDKNL.

It belongs to the TPT transporter family. TPT (TC 2.A.7.9) subfamily.

The protein resides in the membrane. In Arabidopsis thaliana (Mouse-ear cress), this protein is Nucleotide-sugar uncharacterized transporter 1.